The primary structure comprises 63 residues: Prokaryotic ubiquitin-like protein Pup (63 aa).

The tract at residues 1 to 35 (MSGQQSQINAGGGNGQGGDTPEFDAGQVSINSAGT) is disordered. Residues 19–57 (DTPEFDAGQVSINSAGTDDLLDEIDGLLESNAEEFVRSY) are ARC ATPase binding. Glu63 participates in a covalent cross-link: Isoglutamyl lysine isopeptide (Glu-Lys) (interchain with K-? in acceptor proteins).

The protein belongs to the prokaryotic ubiquitin-like protein family. Strongly interacts with the proteasome-associated ATPase ARC through a hydrophobic interface; the interacting region of Pup lies in its C-terminal half. There is one Pup binding site per ARC hexamer ring.

Its pathway is protein degradation; proteasomal Pup-dependent pathway. Functionally, protein modifier that is covalently attached to lysine residues of substrate proteins, thereby targeting them for proteasomal degradation. The tagging system is termed pupylation. The chain is Prokaryotic ubiquitin-like protein Pup from Corynebacterium aurimucosum (strain ATCC 700975 / DSM 44827 / CIP 107346 / CN-1) (Corynebacterium nigricans).